The sequence spans 377 residues: Succinyl-diaminopimelate desuccinylase (377 aa).

His-66 lines the Zn(2+) pocket. Asp-68 is a catalytic residue. Asp-99 serves as a coordination point for Zn(2+). Glu-133 (proton acceptor) is an active-site residue. Residues Glu-134, Glu-162, and His-348 each coordinate Zn(2+).

It belongs to the peptidase M20A family. DapE subfamily. As to quaternary structure, homodimer. Zn(2+) serves as cofactor. It depends on Co(2+) as a cofactor.

It catalyses the reaction N-succinyl-(2S,6S)-2,6-diaminopimelate + H2O = (2S,6S)-2,6-diaminopimelate + succinate. It participates in amino-acid biosynthesis; L-lysine biosynthesis via DAP pathway; LL-2,6-diaminopimelate from (S)-tetrahydrodipicolinate (succinylase route): step 3/3. Functionally, catalyzes the hydrolysis of N-succinyl-L,L-diaminopimelic acid (SDAP), forming succinate and LL-2,6-diaminopimelate (DAP), an intermediate involved in the bacterial biosynthesis of lysine and meso-diaminopimelic acid, an essential component of bacterial cell walls. The protein is Succinyl-diaminopimelate desuccinylase of Xylella fastidiosa (strain M12).